The chain runs to 723 residues: 1,3-beta-galactosyl-N-acetylhexosamine phosphorylase Cphy0577 (723 aa).

The Proton donor role is filled by aspartate 317.

This sequence belongs to the glycoside hydrolase 112 family.

The catalysed reaction is beta-D-galactosyl-(1-&gt;3)-N-acetyl-D-glucosamine + phosphate = alpha-D-galactose 1-phosphate + N-acetyl-D-glucosamine. Functionally, reversibly phosphorolyzes beta-D-galactopyranosyl-(1-&gt;3)-N-acetyl-D-glucosamine to form alpha-D-galactopyranose 1-phosphate and acetyl-D-glucosamine. Active towards galacto-N-biose and lacto-N-biose. Does not phosphorolyze galacto-N-tetraose or lacto-N-tetraose. In the reverse reaction has activity toward N-acetyl-D-glucosamine and N-acetyl-D-galactosamine, but not L-rhamnose, D-glucose or D-galactose. This chain is 1,3-beta-galactosyl-N-acetylhexosamine phosphorylase Cphy0577, found in Lachnoclostridium phytofermentans (strain ATCC 700394 / DSM 18823 / ISDg) (Clostridium phytofermentans).